Consider the following 349-residue polypeptide: Terpene cyclase janA (349 aa).

N80 carries N-linked (GlcNAc...) asparagine glycosylation. 6 helical membrane passes run 81 to 101 (LSLYGVAFASALVPMWLVIVL), 116 to 136 (LAFLAGPLVQCLGPGLVIPAI), 155 to 175 (IGFYPSSMIIGYILPLILAAL), 189 to 209 (LIAVWQGWPVYTSLIMLIIHY), 223 to 243 (IACAFAFACSTAGHLAFLWFA), and 308 to 328 (VILIFGMAGVVFLGPCSVALL).

It belongs to the membrane-bound ascI terpene cyclase family.

Its subcellular location is the membrane. It participates in secondary metabolite biosynthesis. Part of the gene cluster that mediates the biosynthesis of the indole diterpenes janthitremanes such as shearinine K or shearinine A. The geranylgeranyl diphosphate (GGPP) synthase janG catalyzes the first step in janthitremane biosynthesis via conversion of farnesyl pyrophosphate and isopentyl pyrophosphate into geranylgeranyl pyrophosphate (GGPP). Condensation of indole-3-glycerol phosphate with GGPP by the prenyl transferase janC then forms 3-geranylgeranylindole (3-GGI). Epoxidation by the FAD-dependent monooxygenase janM leads to a epoxidized-GGI that is substrate of the terpene cyclase janB for cyclization to yield paspaline. Paspaline is subsequently converted to 13-desoxypaspaline by the cytochrome P450 monooxygenase janP, via beta-PC-M6 in a series of alpha-face oxidations. The cytochrome P450 monooxygenase janQ is proposed to carry out sequential beta-face oxidation steps at C-7 and C-13 of 13-desoxypaspaline to form paspalicine and paspalinine respectively. The indole diterpene prenyltransferase janD may then convert paspalinine into shearinine K which is substrate of janO and/or additional enzymes for oxidation and cyclization to generate shearinine A. The chain is Terpene cyclase janA from Penicillium janthinellum (Penicillium vitale).